The sequence spans 159 residues: ATP synthase subunit b (159 aa).

Residues 8–28 (ILATIINFIILILILKHFFWD) traverse the membrane as a helical segment.

This sequence belongs to the ATPase B chain family. In terms of assembly, F-type ATPases have 2 components, F(1) - the catalytic core - and F(0) - the membrane proton channel. F(1) has five subunits: alpha(3), beta(3), gamma(1), delta(1), epsilon(1). F(0) has three main subunits: a(1), b(2) and c(10-14). The alpha and beta chains form an alternating ring which encloses part of the gamma chain. F(1) is attached to F(0) by a central stalk formed by the gamma and epsilon chains, while a peripheral stalk is formed by the delta and b chains.

It localises to the cell membrane. F(1)F(0) ATP synthase produces ATP from ADP in the presence of a proton or sodium gradient. F-type ATPases consist of two structural domains, F(1) containing the extramembraneous catalytic core and F(0) containing the membrane proton channel, linked together by a central stalk and a peripheral stalk. During catalysis, ATP synthesis in the catalytic domain of F(1) is coupled via a rotary mechanism of the central stalk subunits to proton translocation. Its function is as follows. Component of the F(0) channel, it forms part of the peripheral stalk, linking F(1) to F(0). The chain is ATP synthase subunit b from Clostridium perfringens (strain ATCC 13124 / DSM 756 / JCM 1290 / NCIMB 6125 / NCTC 8237 / Type A).